The chain runs to 319 residues: Protein MGF 360-8L (319 aa).

The protein belongs to the asfivirus MGF 360 family.

Plays a role in virus cell tropism, and may be required for efficient virus replication in macrophages. The polypeptide is Protein MGF 360-8L (Ornithodoros (relapsing fever ticks)).